Here is a 102-residue protein sequence, read N- to C-terminus: Small ribosomal subunit protein uS10 (102 aa).

It belongs to the universal ribosomal protein uS10 family. Part of the 30S ribosomal subunit.

In terms of biological role, involved in the binding of tRNA to the ribosomes. The protein is Small ribosomal subunit protein uS10 of Pelotomaculum thermopropionicum (strain DSM 13744 / JCM 10971 / SI).